A 561-amino-acid polypeptide reads, in one-letter code: Putative transport protein ASA_2308 (561 aa).

5 consecutive transmembrane segments (helical) span residues 8–28, 37–57, 66–86, 90–110, and 161–181; these read LLHQ…LLLG, IGNT…GFEF, FMLF…SVFL, IHYI…TVGL, and NMGI…MLVV. RCK C-terminal domains follow at residues 206-291 and 293-376; these read SDNE…NYRN and KEVF…KIGF. 5 consecutive transmembrane segments (helical) span residues 386-406, 409-429, 450-470, 476-496, and 541-561; these read LVAF…SLVF, LEFG…MGYL, LGLA…ILDH, AVVL…GYLF, and TYAV…GFWF.

The protein belongs to the AAE transporter (TC 2.A.81) family. YbjL subfamily.

The protein resides in the cell membrane. The polypeptide is Putative transport protein ASA_2308 (Aeromonas salmonicida (strain A449)).